Consider the following 126-residue polypeptide: Histone H2B (126 aa).

Over residues 1–12 the composition is skewed to low complexity; sequence MPEPAKSAPAAK. Positions 1–35 are disordered; sequence MPEPAKSAPAAKKGSKKAVSKVQKKDGKKRRKSRK. Lys6 and Lys13 each carry N6-acetyllysine. Residue Ser15 is modified to Phosphoserine. Lys16 and Lys21 each carry N6-acetyllysine. O-linked (GlcNAc) serine glycosylation is present at Ser113. A Glycyl lysine isopeptide (Lys-Gly) (interchain with G-Cter in ubiquitin) cross-link involves residue Lys121.

This sequence belongs to the histone H2B family. In terms of assembly, the nucleosome is a histone octamer containing two molecules each of H2A, H2B, H3 and H4 assembled in one H3-H4 heterotetramer and two H2A-H2B heterodimers. The octamer wraps approximately 147 bp of DNA. Monoubiquitination of Lys-121 by BRE1 gives a specific tag for epigenetic transcriptional activation and is also prerequisite for histone H3 'Lys-4' and 'Lys-79' methylation. In terms of processing, phosphorylated on Ser-15 during apoptosis; which facilitates apoptotic chromatin condensation. Post-translationally, glcNAcylation at Ser-113 promotes monoubiquitination of Lys-121. It fluctuates in response to extracellular glucose, and associates with transcribed genes. In terms of tissue distribution, expressed by the skin granular glands.

The protein resides in the nucleus. The protein localises to the secreted. It localises to the chromosome. Core component of nucleosome. Nucleosomes wrap and compact DNA into chromatin, limiting DNA accessibility to the cellular machineries which require DNA as a template. Histones thereby play a central role in transcription regulation, DNA repair, DNA replication and chromosomal stability. DNA accessibility is regulated via a complex set of post-translational modifications of histones, also called histone code, and nucleosome remodeling. Its function is as follows. Has antibacterial activity against the Gram-negative bacteria E.coli and the Gram-positive bacteria S.aureus. This is Histone H2B from Zhangixalus schlegelii (Japanese gliding frog).